The chain runs to 142 residues: Galactose-6-phosphate isomerase subunit LacA 2 (142 aa).

The protein belongs to the LacAB/RpiB family. As to quaternary structure, heteromultimeric protein consisting of LacA and LacB.

It carries out the reaction aldehydo-D-galactose 6-phosphate = keto-D-tagatose 6-phosphate. Its pathway is carbohydrate metabolism; D-galactose 6-phosphate degradation; D-tagatose 6-phosphate from D-galactose 6-phosphate: step 1/1. The polypeptide is Galactose-6-phosphate isomerase subunit LacA 2 (Streptococcus pyogenes serotype M1).